The sequence spans 170 residues: MAVLDVLIYPDENLAKVCQPVETVDAELNTFIDNMFDTMYEHEGIGLAAPQVNVLKRVITIDIEGDKTNQIVLINPEILESSGETGIEEGCLSIPGCRALVPRKEKLTVKALNREGQTFTLEADGLLAICIQHEIDHLNGVLFVDHISQLKRQRIKEKMLKLKKQIERAK.

Fe cation-binding residues include C91 and H133. E134 is a catalytic residue. H137 is a binding site for Fe cation.

This sequence belongs to the polypeptide deformylase family. The cofactor is Fe(2+).

The catalysed reaction is N-terminal N-formyl-L-methionyl-[peptide] + H2O = N-terminal L-methionyl-[peptide] + formate. In terms of biological role, removes the formyl group from the N-terminal Met of newly synthesized proteins. Requires at least a dipeptide for an efficient rate of reaction. N-terminal L-methionine is a prerequisite for activity but the enzyme has broad specificity at other positions. This is Peptide deformylase from Glaesserella parasuis serovar 5 (strain SH0165) (Haemophilus parasuis).